A 1174-amino-acid chain; its full sequence is Male determiner protein Mdmd(Y) (1174 aa).

Positions 1–15 are enriched in basic and acidic residues; the sequence is MNATDAESRKPENKP. Disordered stretches follow at residues 1-51, 79-109, and 136-259; these read MNAT…SGQR, RKDGSNEMLPKEDSINTNHNYTTDSDEHPVE, and KQLS…LRRS. The span at 16 to 35 shows a compositional bias: low complexity; that stretch reads SSESSSSGSTSGSSDGEVSS. The span at 36-47 shows a compositional bias: polar residues; the sequence is KTYFKNNKSKVL. Over residues 79–92 the composition is skewed to basic and acidic residues; it reads RKDGSNEMLPKEDS. Over residues 138–153 the composition is skewed to low complexity; that stretch reads LSAYRSRSRSTRLSYS. Over residues 167–180 the composition is skewed to basic residues; it reads SRYKKSVLRNRRTS. Basic and acidic residues predominate over residues 183–200; that stretch reads HGRDSSTTKRSVSRDKDN. Basic residues predominate over residues 201 to 223; that stretch reads RLRRRIGSSRSHTRSHSRFRRSE. Basic and acidic residues predominate over residues 235-259; sequence RSQERRHERRRSMSSDYERIALRRS. Residues 348–531 enclose the MIF4G domain; that stretch reads KKYIHGYINK…KVLFQVRRDG (184 aa). Positions 597-608 are enriched in low complexity; it reads DSDGSFGSGSNS. The segment at 597 to 616 is disordered; it reads DSDGSFGSGSNSETALSDCD. The MI domain maps to 641–757; it reads ALRRTIYLTL…SWDVLDCIKL (117 aa). The segment covering 840–857 has biased composition (low complexity); the sequence is SAPSSSSSSSLSSELSAP. Disordered stretches follow at residues 840 to 1045 and 1089 to 1135; these read SAPS…SRTK and KGGP…SREY. 2 stretches are compositionally biased toward basic residues: residues 869-886 and 895-909; these read KKKHKGKNKKMTKKKNPS and IVGKNKIAAKNKTIK. The span at 910 to 924 shows a compositional bias: basic and acidic residues; sequence RRTDKDNSSSKDNFL. Over residues 926–957 the composition is skewed to low complexity; sequence SESSSNESISLDSLSSELFAPSSYSSSESSND. The span at 963–1001 shows a compositional bias: basic residues; sequence KHKGKNKKMTKKKNPSNKREKTKKKLSKNKKAPNKNTKK. The segment covering 1010 to 1020 has biased composition (low complexity); the sequence is SSESSISESKS. Basic residues predominate over residues 1034-1045; that stretch reads RKKRVTSKSRTK. Basic and acidic residues predominate over residues 1089–1118; that stretch reads KGGPNCRKDNYGNRQNHEISQRHDSEIKRR. The span at 1119–1130 shows a compositional bias: basic residues; sequence REERKKRHHEKN.

Belongs to the CWC22 family. In terms of assembly, component of the spliceosome C complex.

It is found in the nucleus speckle. In terms of biological role, male determiner protein (M-factor) that controls male somatic sexual differentiation. Acts as a dominant factor that regulates the mRNA splicing of transformer (tra) and doublesex (dsx) transcripts and promotes expression of male splice forms of tra and dsx. Probably acts as a component of the spliceosome C complex required for mRNA splicing factor and exon-junction complex (EJC) assembly. Hinders eIF4AIII from non-specifically binding RNA and escorts it to the splicing machinery to promote EJC assembly on mature mRNAs. This chain is Male determiner protein Mdmd(Y), found in Musca domestica (House fly).